We begin with the raw amino-acid sequence, 218 residues long: Small ribosomal subunit protein uS3c (218 aa).

The region spanning 39-118 is the KH type-2 domain; sequence IRNFIKNYVQ…KLNIAITRIA (80 aa).

Belongs to the universal ribosomal protein uS3 family. As to quaternary structure, part of the 30S ribosomal subunit.

It is found in the plastid. The protein resides in the chloroplast. In Ipomoea purpurea (Common morning glory), this protein is Small ribosomal subunit protein uS3c (rps3).